A 368-amino-acid polypeptide reads, in one-letter code: 3-dehydroquinate synthase (368 aa).

NAD(+) contacts are provided by residues 71–76 (DGESFK), 105–109 (GVIGD), 129–130 (TT), Lys-142, Lys-151, and 169–172 (TLRT). Residues Glu-184, His-247, and His-264 each coordinate Zn(2+).

The protein belongs to the sugar phosphate cyclases superfamily. Dehydroquinate synthase family. Requires Co(2+) as cofactor. Zn(2+) is required as a cofactor. NAD(+) serves as cofactor.

Its subcellular location is the cytoplasm. It carries out the reaction 7-phospho-2-dehydro-3-deoxy-D-arabino-heptonate = 3-dehydroquinate + phosphate. It participates in metabolic intermediate biosynthesis; chorismate biosynthesis; chorismate from D-erythrose 4-phosphate and phosphoenolpyruvate: step 2/7. Functionally, catalyzes the conversion of 3-deoxy-D-arabino-heptulosonate 7-phosphate (DAHP) to dehydroquinate (DHQ). This chain is 3-dehydroquinate synthase, found in Ralstonia pickettii (strain 12J).